A 117-amino-acid chain; its full sequence is Large ribosomal subunit protein bL17 (117 aa).

Belongs to the bacterial ribosomal protein bL17 family. As to quaternary structure, part of the 50S ribosomal subunit. Contacts protein L32.

The polypeptide is Large ribosomal subunit protein bL17 (Campylobacter lari (strain RM2100 / D67 / ATCC BAA-1060)).